A 340-amino-acid polypeptide reads, in one-letter code: Probable dual-specificity RNA methyltransferase RlmN (340 aa).

Residue Glu-93 is the Proton acceptor of the active site. The Radical SAM core domain occupies 99–327 (TAKRLTVCVS…VSVRYSRGLE (229 aa)). Cys-106 and Cys-332 are joined by a disulfide. [4Fe-4S] cluster contacts are provided by Cys-113, Cys-117, and Cys-120. Residues 160–161 (GE), Ser-190, 213–215 (SLH), and Asn-289 each bind S-adenosyl-L-methionine. Cys-332 serves as the catalytic S-methylcysteine intermediate.

The protein belongs to the radical SAM superfamily. RlmN family. The cofactor is [4Fe-4S] cluster.

It localises to the cytoplasm. It catalyses the reaction adenosine(2503) in 23S rRNA + 2 reduced [2Fe-2S]-[ferredoxin] + 2 S-adenosyl-L-methionine = 2-methyladenosine(2503) in 23S rRNA + 5'-deoxyadenosine + L-methionine + 2 oxidized [2Fe-2S]-[ferredoxin] + S-adenosyl-L-homocysteine. The enzyme catalyses adenosine(37) in tRNA + 2 reduced [2Fe-2S]-[ferredoxin] + 2 S-adenosyl-L-methionine = 2-methyladenosine(37) in tRNA + 5'-deoxyadenosine + L-methionine + 2 oxidized [2Fe-2S]-[ferredoxin] + S-adenosyl-L-homocysteine. Functionally, specifically methylates position 2 of adenine 2503 in 23S rRNA and position 2 of adenine 37 in tRNAs. In Rippkaea orientalis (strain PCC 8801 / RF-1) (Cyanothece sp. (strain PCC 8801)), this protein is Probable dual-specificity RNA methyltransferase RlmN.